Reading from the N-terminus, the 384-residue chain is PqqA peptide cyclase (384 aa).

The region spanning 5–220 (VGLPLWLLAE…TNEYREKLKA (216 aa)) is the Radical SAM core domain. [4Fe-4S] cluster contacts are provided by cysteine 19, cysteine 23, and cysteine 26.

It belongs to the radical SAM superfamily. PqqE family. As to quaternary structure, interacts with PqqD. The interaction is necessary for activity of PqqE. The cofactor is [4Fe-4S] cluster.

The catalysed reaction is [PQQ precursor protein] + S-adenosyl-L-methionine = E-Y cross-linked-[PQQ precursor protein] + 5'-deoxyadenosine + L-methionine + H(+). Its pathway is cofactor biosynthesis; pyrroloquinoline quinone biosynthesis. Catalyzes the cross-linking of a glutamate residue and a tyrosine residue in the PqqA protein as part of the biosynthesis of pyrroloquinoline quinone (PQQ). This Acinetobacter baumannii (strain SDF) protein is PqqA peptide cyclase.